A 562-amino-acid polypeptide reads, in one-letter code: 4-coumarate--CoA ligase-like 9 (562 aa).

6 residues coordinate ATP: serine 212, serine 213, glycine 214, threonine 215, threonine 216, and lysine 220. Arginine 281 serves as a coordination point for CoA. The interval 283–352 (ELEAMFKAVE…QKFPDVDIVQ (70 aa)) is SBD1. ATP is bound by residues glutamine 352, glycine 353, threonine 357, aspartate 438, and arginine 453. The interval 353-417 (GYGLTESSGP…LRGPVIMKGY (65 aa)) is SBD2. 2 residues coordinate CoA: lysine 461 and alanine 462. An ATP-binding site is contributed by lysine 544. Positions 560-562 (SKL) match the Microbody targeting signal motif.

Belongs to the ATP-dependent AMP-binding enzyme family. Mg(2+) is required as a cofactor. Expressed at low level in leaves.

Its subcellular location is the peroxisome. It carries out the reaction (9S,13S,15Z)-12-oxophyto-10,15-dienoate + ATP + CoA = (10Z,15Z)-12-oxophytodienoyl-CoA + AMP + diphosphate. The catalysed reaction is hexadecanoate + ATP + CoA = hexadecanoyl-CoA + AMP + diphosphate. It catalyses the reaction (9Z)-octadecenoate + ATP + CoA = (9Z)-octadecenoyl-CoA + AMP + diphosphate. The enzyme catalyses octadecanoate + ATP + CoA = octadecanoyl-CoA + AMP + diphosphate. It carries out the reaction tetradecanoate + ATP + CoA = tetradecanoyl-CoA + AMP + diphosphate. The catalysed reaction is dodecanoate + ATP + CoA = dodecanoyl-CoA + AMP + diphosphate. It catalyses the reaction decanoate + ATP + CoA = decanoyl-CoA + AMP + diphosphate. The enzyme catalyses octanoate + ATP + CoA = octanoyl-CoA + AMP + diphosphate. It carries out the reaction (9Z,12Z)-octadecadienoate + ATP + CoA = (9Z,12Z)-octadecadienoyl-CoA + AMP + diphosphate. The catalysed reaction is (9Z,12Z,15Z)-octadecatrienoate + ATP + CoA = (9Z,12Z,15Z)-octadecatrienoyl-CoA + AMP + diphosphate. It catalyses the reaction nonanoate + ATP + CoA = nonanoyl-CoA + AMP + diphosphate. Contributes to jasmonic acid biosynthesis by initiating the beta-oxidative chain shortening of its precursors. Converts 12-oxo-phytodienoic acid (OPDA) into OPDA-CoA. Follows a two-step reaction mechanism, wherein the carboxylate substrate first undergoes adenylation by ATP, followed by a thioesterification in the presence of CoA to yield the final CoA thioester. This is 4-coumarate--CoA ligase-like 9 from Arabidopsis thaliana (Mouse-ear cress).